Reading from the N-terminus, the 180-residue chain is Ribulose bisphosphate carboxylase small subunit, chloroplastic 3 (180 aa).

Residues 1 to 56 (MASSLMSNAITAVVGASGAQANMVAPFNGLKSIASFPVTRKSNDITSIASNGGRVQ) constitute a chloroplast transit peptide.

The protein belongs to the RuBisCO small chain family. As to quaternary structure, heterohexadecamer of 8 large and 8 small subunits.

The protein resides in the plastid. It is found in the chloroplast. In terms of biological role, ruBisCO catalyzes two reactions: the carboxylation of D-ribulose 1,5-bisphosphate, the primary event in carbon dioxide fixation, as well as the oxidative fragmentation of the pentose substrate. Both reactions occur simultaneously and in competition at the same active site. Although the small subunit is not catalytic it is essential for maximal activity. The protein is Ribulose bisphosphate carboxylase small subunit, chloroplastic 3 of Amaranthus hypochondriacus (Prince-of-Wales feather).